The chain runs to 247 residues: uncharacterized protein (247 aa).

This sequence belongs to the AIM2 family.

Its subcellular location is the cytoplasm. The protein localises to the nucleus. This is an uncharacterized protein from Schizosaccharomyces pombe (strain 972 / ATCC 24843) (Fission yeast).